The following is a 213-amino-acid chain: MMQTVAVIDYGMGNLHSVAKALEHVGAGRVLVSSDAAVIREADRVVFPGVGAIRDCMAEIRRLGFDALVREVSQDRPFLGICVGMQALLERSEENDGVDCIGLFPGQVRFFGKDLHEAGEHLKVPHMGWNQVSQAVEHPLWHEIPDQARFYFVHSYYIEAGNPRQVVGHGHYGVDFAAALAEGSRFAVQFHPEKSHTHGLQLLQNFVAWDGRW.

Residues 4–213 (TVAVIDYGMG…QNFVAWDGRW (210 aa)) form the Glutamine amidotransferase type-1 domain. Residue Cys-82 is the Nucleophile of the active site. Residues His-191 and Glu-193 contribute to the active site.

As to quaternary structure, heterodimer of HisH and HisF.

Its subcellular location is the cytoplasm. It catalyses the reaction 5-[(5-phospho-1-deoxy-D-ribulos-1-ylimino)methylamino]-1-(5-phospho-beta-D-ribosyl)imidazole-4-carboxamide + L-glutamine = D-erythro-1-(imidazol-4-yl)glycerol 3-phosphate + 5-amino-1-(5-phospho-beta-D-ribosyl)imidazole-4-carboxamide + L-glutamate + H(+). It carries out the reaction L-glutamine + H2O = L-glutamate + NH4(+). It functions in the pathway amino-acid biosynthesis; L-histidine biosynthesis; L-histidine from 5-phospho-alpha-D-ribose 1-diphosphate: step 5/9. IGPS catalyzes the conversion of PRFAR and glutamine to IGP, AICAR and glutamate. The HisH subunit provides the glutamine amidotransferase activity that produces the ammonia necessary to HisF for the synthesis of IGP and AICAR. This chain is Imidazole glycerol phosphate synthase subunit HisH 1 (hisH1), found in Pseudomonas aeruginosa (strain ATCC 15692 / DSM 22644 / CIP 104116 / JCM 14847 / LMG 12228 / 1C / PRS 101 / PAO1).